The sequence spans 407 residues: Putative glycosyltransferase YtcC (407 aa).

The protein belongs to the glycosyltransferase group 1 family. Glycosyltransferase 4 subfamily.

The chain is Putative glycosyltransferase YtcC (ytcC) from Bacillus subtilis (strain 168).